A 299-amino-acid polypeptide reads, in one-letter code: J domain-containing protein CG6693 (299 aa).

Residues 15–82 enclose the J domain; that stretch reads DVYKLMELAR…QKRALYDEQG (68 aa). S239 carries the post-translational modification Phosphoserine. The disordered stretch occupies residues 266 to 299; it reads FEKKKKKSKKPAAKQETKPKLNGVKAGRVEKGKN. A compositionally biased stretch (basic residues) spans 268 to 277; it reads KKKKKSKKPA.

The polypeptide is J domain-containing protein CG6693 (Drosophila melanogaster (Fruit fly)).